We begin with the raw amino-acid sequence, 253 residues long: uncharacterized protein (253 aa).

This is an uncharacterized protein from Caenorhabditis elegans.